Reading from the N-terminus, the 146-residue chain is Leptin (146 aa).

C96 and C146 are oxidised to a cystine.

It belongs to the leptin family.

It localises to the secreted. Its function is as follows. Key player in the regulation of energy balance and body weight control. Once released into the circulation, has central and peripheral effects by binding LEPR, found in many tissues, which results in the activation of several major signaling pathways. In the hypothalamus, acts as an appetite-regulating factor that induces a decrease in food intake and an increase in energy consumption by inducing anorexinogenic factors and suppressing orexigenic neuropeptides, also regulates bone mass and secretion of hypothalamo-pituitary-adrenal hormones. In the periphery, increases basal metabolism, influences reproductive function, regulates pancreatic beta-cell function and insulin secretion, is pro-angiogenic for endothelial cell and affects innate and adaptive immunity. In the arcuate nucleus of the hypothalamus, activates by depolarization POMC neurons inducing FOS and SOCS3 expression to release anorexigenic peptides and inhibits by hyperpolarization NPY neurons inducing SOCS3 with a consequent reduction on release of orexigenic peptides. In addition to its known satiety inducing effect, has a modulatory role in nutrient absorption. In the intestine, reduces glucose absorption by enterocytes by activating PKC and leading to a sequential activation of p38, PI3K and ERK signaling pathways which exerts an inhibitory effect on glucose absorption. Acts as a growth factor on certain tissues, through the activation of different signaling pathways increases expression of genes involved in cell cycle regulation such as CCND1, via JAK2-STAT3 pathway, or VEGFA, via MAPK1/3 and PI3K-AKT1 pathways. May also play an apoptotic role via JAK2-STAT3 pathway and up-regulation of BIRC5 expression. Pro-angiogenic, has mitogenic activity on vascular endothelial cells and plays a role in matrix remodeling by regulating the expression of matrix metalloproteinases (MMPs) and tissue inhibitors of metalloproteinases (TIMPs). In innate immunity, modulates the activity and function of neutrophils by increasing chemotaxis and the secretion of oxygen radicals. Increases phagocytosis by macrophages and enhances secretion of pro-inflammatory mediators. Increases cytotoxic ability of NK cells. Plays a pro-inflammatory role, in synergy with IL1B, by inducing NOS2 which promotes the production of IL6, IL8 and Prostaglandin E2, through a signaling pathway that involves JAK2, PI3K, MAP2K1/MEK1 and MAPK14/p38. In adaptive immunity, promotes the switch of memory T-cells towards T helper-1 cell immune responses. Increases CD4(+)CD25(-) T-cell proliferation and reduces autophagy during TCR (T-cell receptor) stimulation, through MTOR signaling pathway activation and BCL2 up-regulation. The sequence is that of Leptin (LEP) from Pan troglodytes (Chimpanzee).